The following is a 315-amino-acid chain: Neuroguidin (315 aa).

A2 bears the N-acetylalanine mark. A coiled-coil region spans residues 5 to 42 (EVLESDLPNAVALLKNLQEQVMAVTAQVQTLTKKVQAK). Positions 41-174 (AKAYPTEKGL…KGTAKKYVPP (134 aa)) are necessary for interaction with EIF4E. Phosphoserine is present on residues S121, S142, and S143. Residues 123 to 174 (SENDPLRFKPHPSNMMSKLSSEDEEEDEAEEGQSGASGKKSGKGTAKKYVPP) form a disordered region. Positions 144–153 (EDEEEDEAEE) are enriched in acidic residues. Positions 181–205 (YDETEAEREKKRLERAKRRALSSSV) form a coiled coil. A phosphoserine mark is found at S204 and S214. Residues 252-315 (SKREKGRRKR…RKKKGFRRRR (64 aa)) form a disordered region. The span at 264–276 (VMSSQLHSLTHFS) shows a compositional bias: polar residues. The span at 295-315 (TKKRKKIPKKGRKKKGFRRRR) shows a compositional bias: basic residues.

The protein belongs to the SAS10 family. As to quaternary structure, part of the small subunit (SSU) processome, composed of more than 70 proteins and the RNA chaperone small nucleolar RNA (snoRNA) U3. Interacts with CPEB1 and EIF4E.

It localises to the nucleus. Its subcellular location is the nucleolus. The protein resides in the chromosome. It is found in the centromere. The protein localises to the cytoplasm. It localises to the cell projection. Its subcellular location is the axon. The protein resides in the dendrite. It is found in the filopodium. In terms of biological role, part of the small subunit (SSU) processome, first precursor of the small eukaryotic ribosomal subunit. During the assembly of the SSU processome in the nucleolus, many ribosome biogenesis factors, an RNA chaperone and ribosomal proteins associate with the nascent pre-rRNA and work in concert to generate RNA folding, modifications, rearrangements and cleavage as well as targeted degradation of pre-ribosomal RNA by the RNA exosome. Its dissociation from the complex determines the transition from state pre-A1 to state pre-A1*. Inhibits mRNA translation in a cytoplasmic polyadenylation element (CPE)-dependent manner. This is Neuroguidin (NGDN) from Bos taurus (Bovine).